The sequence spans 82 residues: Small ribosomal subunit protein eS27 (82 aa).

The C4-type zinc-finger motif lies at 37–59 (CPGCFTITTVFSHAQTVVICQGC).

The protein belongs to the eukaryotic ribosomal protein eS27 family. Component of the small ribosomal subunit (SSU). Mature N.crassa ribosomes consist of a small (40S) and a large (60S) subunit. The 40S small subunit contains 1 molecule of ribosomal RNA (18S rRNA) and at least 32 different proteins. The large 60S subunit contains 3 rRNA molecules (26S, 5.8S and 5S rRNA) and at least 42 different proteins. Requires Zn(2+) as cofactor.

The protein localises to the cytoplasm. Functionally, component of the ribosome, a large ribonucleoprotein complex responsible for the synthesis of proteins in the cell. The small ribosomal subunit (SSU) binds messenger RNAs (mRNAs) and translates the encoded message by selecting cognate aminoacyl-transfer RNA (tRNA) molecules. The large subunit (LSU) contains the ribosomal catalytic site termed the peptidyl transferase center (PTC), which catalyzes the formation of peptide bonds, thereby polymerizing the amino acids delivered by tRNAs into a polypeptide chain. The nascent polypeptides leave the ribosome through a tunnel in the LSU and interact with protein factors that function in enzymatic processing, targeting, and the membrane insertion of nascent chains at the exit of the ribosomal tunnel. The protein is Small ribosomal subunit protein eS27 (crp-6) of Neurospora crassa (strain ATCC 24698 / 74-OR23-1A / CBS 708.71 / DSM 1257 / FGSC 987).